The following is a 418-amino-acid chain: UPF0754 membrane protein alr5253 (418 aa).

The next 2 membrane-spanning stretches (helical) occupy residues 10-30 (WSHLWLYVSPPILGGIIGYFT) and 394-414 (IVSLGGILGLIVGLFQTAFFI).

This sequence belongs to the UPF0754 family.

Its subcellular location is the cell inner membrane. This is UPF0754 membrane protein alr5253 from Nostoc sp. (strain PCC 7120 / SAG 25.82 / UTEX 2576).